A 386-amino-acid polypeptide reads, in one-letter code: Succinate--CoA ligase [ADP-forming] subunit beta (386 aa).

Residues K9–E244 form the ATP-grasp domain. Residues K46, G53 to G55, E99, C102, and E107 each bind ATP. Residues N199 and D213 each contribute to the Mg(2+) site. Residues N264 and G321–M323 contribute to the substrate site.

This sequence belongs to the succinate/malate CoA ligase beta subunit family. In terms of assembly, heterotetramer of two alpha and two beta subunits. Mg(2+) is required as a cofactor.

The catalysed reaction is succinate + ATP + CoA = succinyl-CoA + ADP + phosphate. It catalyses the reaction GTP + succinate + CoA = succinyl-CoA + GDP + phosphate. The protein operates within carbohydrate metabolism; tricarboxylic acid cycle; succinate from succinyl-CoA (ligase route): step 1/1. Functionally, succinyl-CoA synthetase functions in the citric acid cycle (TCA), coupling the hydrolysis of succinyl-CoA to the synthesis of either ATP or GTP and thus represents the only step of substrate-level phosphorylation in the TCA. The beta subunit provides nucleotide specificity of the enzyme and binds the substrate succinate, while the binding sites for coenzyme A and phosphate are found in the alpha subunit. This is Succinate--CoA ligase [ADP-forming] subunit beta from Bacillus mycoides (strain KBAB4) (Bacillus weihenstephanensis).